Here is a 2131-residue protein sequence, read N- to C-terminus: Beta/gamma crystallin domain-containing protein 1 (2131 aa).

5 disordered regions span residues 1 to 53, 104 to 370, 385 to 674, 688 to 707, and 723 to 743; these read MPLS…LPAP, KSRA…KGHA, TEGA…PVHK, RTNS…TPAS, and AKEM…NGVL. Positions 19 to 35 are enriched in basic residues; that stretch reads PPKKHTTFHLWRSKKKQ. The segment covering 135 to 147 has biased composition (polar residues); sequence RNGLESPTRSNAK. 2 stretches are compositionally biased toward basic and acidic residues: residues 160 to 169 and 184 to 194; these read LPERESERSR and GSPRENPREAE. Positions 248–265 are enriched in polar residues; it reads ATTTAKQLHSSPGNSSRQ. A compositionally biased stretch (basic residues) spans 414–424; that stretch reads SGRRSGRRRGS. Positions 479–490 are enriched in low complexity; it reads ASAASPESKPSP. Phosphoserine occurs at positions 483 and 489. 2 stretches are compositionally biased toward basic and acidic residues: residues 536-546 and 562-572; these read PAKESPPKRVP and EAARAIPRELP. Residues 609-619 show a composition bias toward low complexity; that stretch reads RAAGAPGASDA. Basic and acidic residues predominate over residues 723 to 733; it reads AKEMEQPEKKV. Residues S737 and S756 each carry the phosphoserine modification. Disordered regions lie at residues 758–791 and 837–889; these read EEIL…DVQT and DIPT…KDTC. A compositionally biased stretch (polar residues) spans 769-782; it reads GDSSENQALGPQPN. A compositionally biased stretch (low complexity) spans 864–881; the sequence is SPAESSPGPSLSLSAPAP. Position 892 is a phosphoserine (S892). Disordered stretches follow at residues 926-947, 1041-1101, 1271-1302, and 1316-1348; these read LELG…AVGS, QAQS…VFDS, STSQ…EQSN, and SSST…SRSN. T933 is modified (phosphothreonine). Over residues 1055–1089 the composition is skewed to polar residues; the sequence is SSPTNSPSSGNHLATPQRPDQTVTNGQDSPASLLN. 3 stretches are compositionally biased toward low complexity: residues 1091–1101, 1271–1288, and 1316–1327; these read SAGSDDSVFDS, STSQ…QPTT, and SSSTSHSSLKSP. Basic and acidic residues predominate over residues 1328–1348; sequence SHMEKYPQKEKTKEDLDSRSN. Beta/gamma crystallin 'Greek key' domains lie at 1430–1469, 1470–1525, 1531–1571, 1572–1614, 1626–1678, 1679–1721, 1727–1769, 1770–1812, 1823–1860, 1861–1904, 1910–1950, and 1951–1992; these read GKVV…KVVR, GCWI…RHVV, SHID…KVHW, GTWL…RPLK, PKVV…KVLR, GIWV…RPIL, AHMI…NVLS, GVWV…QPIC, NQIH…RVSG, GSWV…RFID, PTII…QVIG, and GIWV…RPFV. Positions 1994–2127 constitute a Ricin B-type lectin domain; sequence KRIYFRLRNK…EKFTQVWEAM (134 aa).

The protein belongs to the beta/gamma-crystallin family.

Its function is as follows. May function as suppressor of malignant melanoma. It may exert its effects through interactions with the cytoskeleton. The polypeptide is Beta/gamma crystallin domain-containing protein 1 (Homo sapiens (Human)).